Consider the following 1116-residue polypeptide: Anillin (1116 aa).

Composition is skewed to basic and acidic residues over residues 1 to 25 (MDPF…KMAD) and 85 to 94 (KQPKTPELPK). 4 disordered regions span residues 1–188 (MDPF…PVGR), 205–257 (DLSH…PKDT), 304–363 (KPNE…KVAT), and 443–522 (NVWT…PRLV). A compositionally biased stretch (polar residues) spans 101–119 (ASHQQLRATNQTPQVSLLS). Residues 120-133 (SDKELTASDVKDAS) are compositionally biased toward basic and acidic residues. The tract at residues 142–254 (LADQRRYWDN…QDTTSCSQRP (113 aa)) is interactions with myh9 and myh10. Residues 226–242 (SKESTTSSASASMNSHS) are compositionally biased toward low complexity. Residues 255–418 (KDTTVNKAVC…LKQNDISSTA (164 aa)) are interaction with F-actin. Composition is skewed to polar residues over residues 304–326 (KPNE…SSPQ) and 336–356 (YSYQ…VQTQ). Positions 416 to 443 (STASLAQQQKKEREKELAALRGRYDRRN) form a coiled coil. A compositionally biased stretch (polar residues) spans 453 to 472 (QGTFPETSSNLPTSDVASCS). A PH domain is found at 975–1099 (SVEDKGFLTM…WMQKLNQFLV (125 aa)).

In terms of assembly, interacts with and bundles F-actin. Interacts with the non-muscle myosin II heavy chains myh9 and myh10, and these interactions may be enhanced by the phosphorylation of myosin II regulatory light chain by mylk.

It localises to the nucleus. Its subcellular location is the cytoplasm. The protein localises to the cytoskeleton. The protein resides in the cell cortex. It is found in the cell projection. It localises to the bleb. In terms of biological role, required for cytokinesis. Essential for the structural integrity of the cleavage furrow and for completion of cleavage furrow ingression. Plays a role in bleb assembly during metaphase and anaphase of mitosis. May play a significant role in podocyte cell migration. The chain is Anillin (anln) from Xenopus laevis (African clawed frog).